A 663-amino-acid polypeptide reads, in one-letter code: Subtilisin-like serine protease (663 aa).

A signal peptide spans 1–23 (MKKFGAVVLALFLVGLMAGSVLA). Positions 24-136 (APQKPAVRNV…IQEDYVVKVA (113 aa)) are cleaved as a propeptide — removed in mature form. One can recognise a Peptidase S8 domain in the interval 139–439 (TEGLDESAAQ…AGRVNAYKAA (301 aa)). Active-site charge relay system residues include Asp-170, His-203, and Ser-382. 9 residues coordinate Ca(2+): Pro-420, Ile-423, Asp-483, Leu-484, Asp-485, Asp-497, Tyr-498, Thr-501, and Glu-507. Residues 537–565 (VSDGSLGQPSGGGSEPSPSPSPEPTVDEK) are disordered. The propeptide at 563–663 (DEKTFTGTVH…YQLDAKVYYG (101 aa)) is removed in mature form.

Belongs to the peptidase S8 family. Monomer.

It catalyses the reaction Hydrolysis of proteins with broad specificity for peptide bonds, and a preference for a large uncharged residue in P1. Hydrolyzes peptide amides.. Its activity is regulated as follows. Resistant to treatment with 5% SDS, 8 M urea, 10% Triton X-100 or 10% Tween-20. Fully active although less stable in the presence of 10 mM EDTA. Activity not affected by the absence or presence of 10 mM CaCl(2). Unstable in the presence of 2 M or over GdnHCl and loses 35% and 99% of its activity upon incubation with 2 and 4 M GdnHCl, respectively, for 1 hour at 55 degrees Celsius. Nearly fully loses activity upon incubation at pH 2.0. In terms of biological role, serine protease with a broad substrate specificity. The sequence is that of Subtilisin-like serine protease from Thermococcus kodakarensis (strain ATCC BAA-918 / JCM 12380 / KOD1) (Pyrococcus kodakaraensis (strain KOD1)).